The primary structure comprises 215 residues: MEKFTVYKGLVAPLNRENVDTDAIIPKQFLKSIKKTGFGQNLFDEWRYLDHGEPGQDCSTRPINPDFVLNQPRYKGAGILLARKNFGCGSSREHAPWALDQFGFRAVIAPSFADIFYNNCFKNGVLPIVLTEMQVDHLFNETQAFNGYQLTIDLEGQKVITPDGTAYSFDVAPFRKHCLLYGLDDIGLTLQHADKIKAYEAERILKMPWLATQLP.

This sequence belongs to the LeuD family. LeuD type 1 subfamily. As to quaternary structure, heterodimer of LeuC and LeuD.

The enzyme catalyses (2R,3S)-3-isopropylmalate = (2S)-2-isopropylmalate. Its pathway is amino-acid biosynthesis; L-leucine biosynthesis; L-leucine from 3-methyl-2-oxobutanoate: step 2/4. Catalyzes the isomerization between 2-isopropylmalate and 3-isopropylmalate, via the formation of 2-isopropylmaleate. This is 3-isopropylmalate dehydratase small subunit from Polynucleobacter asymbioticus (strain DSM 18221 / CIP 109841 / QLW-P1DMWA-1) (Polynucleobacter necessarius subsp. asymbioticus).